The sequence spans 363 residues: Spermidine/putrescine import ATP-binding protein PotA (363 aa).

The 231-residue stretch at 6–236 (LEIRNVTRRF…PRSRFVADFI (231 aa)) folds into the ABC transporter domain. 38–45 (GPSGCGKT) contributes to the ATP binding site.

The protein belongs to the ABC transporter superfamily. Spermidine/putrescine importer (TC 3.A.1.11.1) family. As to quaternary structure, the complex is composed of two ATP-binding proteins (PotA), two transmembrane proteins (PotB and PotC) and a solute-binding protein (PotD).

Its subcellular location is the cell inner membrane. The enzyme catalyses ATP + H2O + polyamine-[polyamine-binding protein]Side 1 = ADP + phosphate + polyamineSide 2 + [polyamine-binding protein]Side 1.. Its function is as follows. Part of the ABC transporter complex PotABCD involved in spermidine/putrescine import. Responsible for energy coupling to the transport system. In Pseudomonas aeruginosa (strain UCBPP-PA14), this protein is Spermidine/putrescine import ATP-binding protein PotA.